The sequence spans 147 residues: MSTYHPKSGDITRKWYVIDATDVVLGRLATHAADLLRGKGKPQFAPNVDCGDHVIVINADKVHVSSNKREREMRYRHSGYPGGLKTMTLGRSLEVHPERVVEESIRGMMPHNRLSRASVKKLHVFAGSEHPYAAQKPETYEFKQVAQ.

The protein belongs to the universal ribosomal protein uL13 family. In terms of assembly, part of the 50S ribosomal subunit.

This protein is one of the early assembly proteins of the 50S ribosomal subunit, although it is not seen to bind rRNA by itself. It is important during the early stages of 50S assembly. The protein is Large ribosomal subunit protein uL13 of Corynebacterium diphtheriae (strain ATCC 700971 / NCTC 13129 / Biotype gravis).